A 400-amino-acid polypeptide reads, in one-letter code: Cytochrome b (400 aa).

The next 4 membrane-spanning stretches (helical) occupy residues 32–52 (FGSL…TLAM), 76–98 (WLIR…LHIG), 113–133 (TWSI…LGYV), and 179–199 (FFSL…MHLI). Heme b-binding residues include H82 and H96. Heme b contacts are provided by H183 and H197. Position 202 (H202) interacts with a ubiquinone. 4 helical membrane passes run 226–246 (YLFK…IFVF), 290–310 (AVGV…PYLD), 322–342 (LSKV…QLGA), and 349–369 (FIVF…IIIP).

Belongs to the cytochrome b family. Fungal cytochrome b-c1 complex contains 10 subunits; 3 respiratory subunits, 2 core proteins and 5 low-molecular weight proteins. Cytochrome b-c1 complex is a homodimer. It depends on heme b as a cofactor.

It is found in the mitochondrion inner membrane. Functionally, component of the ubiquinol-cytochrome c reductase complex (complex III or cytochrome b-c1 complex) that is part of the mitochondrial respiratory chain. The b-c1 complex mediates electron transfer from ubiquinol to cytochrome c. Contributes to the generation of a proton gradient across the mitochondrial membrane that is then used for ATP synthesis. The chain is Cytochrome b (cob) from Epidermophyton floccosum.